Here is a 21-residue protein sequence, read N- to C-terminus: Mast cell protease 3 (21 aa).

Residues 1–21 (IIGGVESRPHSRPYMATLEIT) form the Peptidase S1 domain. Residues 1–21 (IIGGVESRPHSRPYMATLEIT) are disordered.

It belongs to the peptidase S1 family. Granzyme subfamily.

Functionally, thrombin inactivating protease. Displays chymotrypsin-like substrate specificity. The polypeptide is Mast cell protease 3 (Mcpt3) (Mus musculus (Mouse)).